A 176-amino-acid polypeptide reads, in one-letter code: NAD(P)H-quinone oxidoreductase subunit J (176 aa).

Composition is skewed to polar residues over residues 1–12 (MEKDSQATSSDT) and 20–30 (ISQSLSKDGIP). The tract at residues 1–30 (MEKDSQATSSDTSIEKEGVISQSLSKDGIP) is disordered.

The protein belongs to the complex I 30 kDa subunit family. In terms of assembly, NDH-1 can be composed of about 15 different subunits; different subcomplexes with different compositions have been identified which probably have different functions.

It localises to the cellular thylakoid membrane. The catalysed reaction is a plastoquinone + NADH + (n+1) H(+)(in) = a plastoquinol + NAD(+) + n H(+)(out). It catalyses the reaction a plastoquinone + NADPH + (n+1) H(+)(in) = a plastoquinol + NADP(+) + n H(+)(out). Its function is as follows. NDH-1 shuttles electrons from an unknown electron donor, via FMN and iron-sulfur (Fe-S) centers, to quinones in the respiratory and/or the photosynthetic chain. The immediate electron acceptor for the enzyme in this species is believed to be plastoquinone. Couples the redox reaction to proton translocation, and thus conserves the redox energy in a proton gradient. Cyanobacterial NDH-1 also plays a role in inorganic carbon-concentration. The chain is NAD(P)H-quinone oxidoreductase subunit J from Prochlorococcus marinus (strain AS9601).